Here is a 220-residue protein sequence, read N- to C-terminus: RING-H2 finger protein ATL77 (220 aa).

The helical transmembrane segment at 53 to 73 (LMLLSILLCGIICSLGLHYII) threads the bilayer. The RING-type; atypical zinc-finger motif lies at 130–172 (CVICLSDFVAGEQLRVLPKCNHGFHLRCIDKWLTQHMTCPKCR).

The protein belongs to the RING-type zinc finger family. ATL subfamily.

It localises to the membrane. It carries out the reaction S-ubiquitinyl-[E2 ubiquitin-conjugating enzyme]-L-cysteine + [acceptor protein]-L-lysine = [E2 ubiquitin-conjugating enzyme]-L-cysteine + N(6)-ubiquitinyl-[acceptor protein]-L-lysine.. It functions in the pathway protein modification; protein ubiquitination. The chain is RING-H2 finger protein ATL77 (ATL77) from Arabidopsis thaliana (Mouse-ear cress).